A 265-amino-acid chain; its full sequence is Cytochrome c oxidase subunit 3 (265 aa).

6 helical membrane-spanning segments follow: residues proline 16–methionine 36, glycine 41–tryptophan 61, glycine 81–phenylalanine 101, alanine 162–methionine 182, phenylalanine 200–valine 220, and tryptophan 245–isoleucine 265.

Belongs to the cytochrome c oxidase subunit 3 family. In terms of assembly, component of the cytochrome c oxidase (complex IV, CIV), a multisubunit enzyme composed of a catalytic core of 3 subunits and several supernumerary subunits. The complex exists as a monomer or a dimer and forms supercomplexes (SCs) in the inner mitochondrial membrane with ubiquinol-cytochrome c oxidoreductase (cytochrome b-c1 complex, complex III, CIII).

The protein resides in the mitochondrion inner membrane. It catalyses the reaction 4 Fe(II)-[cytochrome c] + O2 + 8 H(+)(in) = 4 Fe(III)-[cytochrome c] + 2 H2O + 4 H(+)(out). Functionally, component of the cytochrome c oxidase, the last enzyme in the mitochondrial electron transport chain which drives oxidative phosphorylation. The respiratory chain contains 3 multisubunit complexes succinate dehydrogenase (complex II, CII), ubiquinol-cytochrome c oxidoreductase (cytochrome b-c1 complex, complex III, CIII) and cytochrome c oxidase (complex IV, CIV), that cooperate to transfer electrons derived from NADH and succinate to molecular oxygen, creating an electrochemical gradient over the inner membrane that drives transmembrane transport and the ATP synthase. Cytochrome c oxidase is the component of the respiratory chain that catalyzes the reduction of oxygen to water. Electrons originating from reduced cytochrome c in the intermembrane space (IMS) are transferred via the dinuclear copper A center (CU(A)) of subunit 2 and heme A of subunit 1 to the active site in subunit 1, a binuclear center (BNC) formed by heme A3 and copper B (CU(B)). The BNC reduces molecular oxygen to 2 water molecules using 4 electrons from cytochrome c in the IMS and 4 protons from the mitochondrial matrix. This is Cytochrome c oxidase subunit 3 (COX3) from Helianthus annuus (Common sunflower).